The chain runs to 278 residues: MGPANSEGTMFDAFSREVGDYYDQANELLRAMFTDNVHYGYWPDPSSIDPLAEAGERMTEQLYERLDVSAGHKVLDVGCGVGKPAAWLARKTGATVKGANVSRNQLEVARDRVRSEGLEDRVSFDLADAMHLPYADDSFDRIWAIESMIHMPDRDQVMREMARVLRPGGRLAIADIVVRGTLDDVATAVVEGFCTLSTARSLEHIDNYPALVEKAGLDLLELTDVSEQTRPTGPAVLPAFDVLLPTLGEEGVAQSKKAWGDMFDLPQYGYVLLTAGKP.

S-adenosyl-L-methionine-binding positions include Gln105 and 128-129; that span reads DA. Glu146 (proton acceptor) is an active-site residue. His150 contributes to the S-adenosyl-L-methionine binding site.

This sequence belongs to the methyltransferase superfamily.

It participates in antibiotic biosynthesis. In terms of biological role, methylase required for synthesis of the 16-membered macrolide antibiotics FD-891 and FD-892. In vitro uses S-adenosyl-L-methionine to methylate a number of biosynthetic intermediates in the synthesis of FD-891. This is Methyltransferase GfsG from Streptomyces halstedii.